A 273-amino-acid polypeptide reads, in one-letter code: DnaJ homolog subfamily C member 27 (273 aa).

GTP-binding positions include 23–30 (GNAEVGKS), 71–75 (DMAGH), and 134–137 (NKVD). Residues 217–273 (DSWDMLGVKPGATREEVNKAYRKLAVLLHPDKCVAPGSEDAFKAVVNARTSLLKNIK) enclose the J domain.

This sequence belongs to the small GTPase superfamily. Rab family.

The protein resides in the nucleus. In terms of biological role, GTPase possibly involved in regulation of the MEK/ERK pathway. This chain is DnaJ homolog subfamily C member 27 (dnajc27), found in Danio rerio (Zebrafish).